Here is a 122-residue protein sequence, read N- to C-terminus: Large ribosomal subunit protein uL14 (122 aa).

The protein belongs to the universal ribosomal protein uL14 family. As to quaternary structure, part of the 50S ribosomal subunit. Forms a cluster with proteins L3 and L19. In the 70S ribosome, L14 and L19 interact and together make contacts with the 16S rRNA in bridges B5 and B8.

Its function is as follows. Binds to 23S rRNA. Forms part of two intersubunit bridges in the 70S ribosome. This is Large ribosomal subunit protein uL14 from Kosmotoga olearia (strain ATCC BAA-1733 / DSM 21960 / TBF 19.5.1).